The primary structure comprises 586 residues: Eukaryotic translation initiation factor 3 subunit D (586 aa).

The disordered stretch occupies residues 107–154 (FGRGGGTVFRGRAQRGGAGQRGGRAGFQRVGAGRGQGGDRYYDNRGAR). Over residues 108 to 131 (GRGGGTVFRGRAQRGGAGQRGGRA) the composition is skewed to gly residues. The interval 301 to 315 (SLDLVTVNENAADAP) is RNA gate. Positions 566 to 577 (FEEDDEAAEEEQ) are enriched in acidic residues. The interval 566-586 (FEEDDEAAEEEQEAKGEVEEA) is disordered.

It belongs to the eIF-3 subunit D family. In terms of assembly, component of the eukaryotic translation initiation factor 3 (eIF-3) complex.

The protein resides in the cytoplasm. In terms of biological role, mRNA cap-binding component of the eukaryotic translation initiation factor 3 (eIF-3) complex, which is involved in protein synthesis of a specialized repertoire of mRNAs and, together with other initiation factors, stimulates binding of mRNA and methionyl-tRNAi to the 40S ribosome. The eIF-3 complex specifically targets and initiates translation of a subset of mRNAs involved in cell proliferation. In the eIF-3 complex, eif3d specifically recognizes and binds the 7-methylguanosine cap of a subset of mRNAs. The sequence is that of Eukaryotic translation initiation factor 3 subunit D from Emericella nidulans (strain FGSC A4 / ATCC 38163 / CBS 112.46 / NRRL 194 / M139) (Aspergillus nidulans).